We begin with the raw amino-acid sequence, 170 residues long: Glycine cleavage system H protein, mitochondrial (170 aa).

A mitochondrion-targeting transit peptide spans 1 to 47 (MLRTTRLWTTRMPTVSKLFLRNSSGNALNKNKLPFLYSSQGPQAVRY). A Lipoyl-binding domain is found at 61 to 143 (TAFVGITKYA…MGDGWLVKMK (83 aa)). Lys102 carries the N6-lipoyllysine modification.

It belongs to the GcvH family. As to quaternary structure, component of the glycine decarboxylase complex (GDC), which is composed of four proteins: P, T, L and H. Requires (R)-lipoate as cofactor.

It localises to the mitochondrion. In terms of biological role, the glycine cleavage system (glycine decarboxylase complex) catalyzes the degradation of glycine. The H protein shuttles the methylamine group of glycine from the P protein to the T protein. The polypeptide is Glycine cleavage system H protein, mitochondrial (GCV3) (Saccharomyces cerevisiae (strain ATCC 204508 / S288c) (Baker's yeast)).